The primary structure comprises 156 residues: Cyanate hydratase (156 aa).

Catalysis depends on residues Arg-96, Glu-99, and Ser-122.

It belongs to the cyanase family.

It carries out the reaction cyanate + hydrogencarbonate + 3 H(+) = NH4(+) + 2 CO2. Catalyzes the reaction of cyanate with bicarbonate to produce ammonia and carbon dioxide. The sequence is that of Cyanate hydratase from Pseudomonas paraeruginosa (strain DSM 24068 / PA7) (Pseudomonas aeruginosa (strain PA7)).